Consider the following 319-residue polypeptide: tRNA U34 carboxymethyltransferase (319 aa).

Residues K88, W102, K107, G126, 176–177 (LE), M192, Y196, and R311 contribute to the carboxy-S-adenosyl-L-methionine site.

It belongs to the class I-like SAM-binding methyltransferase superfamily. CmoB family. In terms of assembly, homotetramer.

The catalysed reaction is carboxy-S-adenosyl-L-methionine + 5-hydroxyuridine(34) in tRNA = 5-carboxymethoxyuridine(34) in tRNA + S-adenosyl-L-homocysteine + H(+). Functionally, catalyzes carboxymethyl transfer from carboxy-S-adenosyl-L-methionine (Cx-SAM) to 5-hydroxyuridine (ho5U) to form 5-carboxymethoxyuridine (cmo5U) at position 34 in tRNAs. This chain is tRNA U34 carboxymethyltransferase, found in Azotobacter vinelandii (strain DJ / ATCC BAA-1303).